A 232-amino-acid chain; its full sequence is Large ribosomal subunit protein uL1 (232 aa).

This sequence belongs to the universal ribosomal protein uL1 family. In terms of assembly, part of the 50S ribosomal subunit.

Its function is as follows. Binds directly to 23S rRNA. The L1 stalk is quite mobile in the ribosome, and is involved in E site tRNA release. Protein L1 is also a translational repressor protein, it controls the translation of the L11 operon by binding to its mRNA. The chain is Large ribosomal subunit protein uL1 from Bacillus pumilus (strain SAFR-032).